Consider the following 207-residue polypeptide: Claudin-11 (207 aa).

A topological domain (cytoplasmic) is located at residue Met1. Residues 2–22 form a helical membrane-spanning segment; sequence VATCLQVVGFVTSFVGWIGII. At 23–82 the chain is on the extracellular side; it reads VTTSTNDWVVTCSYTIPTCRKMDELGSKGLWADCVMATGLYHCKPLVDILILPGYVQACR. Residues 83 to 103 traverse the membrane as a helical segment; the sequence is ALMIAASVLGLPAILLLLTVL. The Cytoplasmic segment spans residues 104–122; the sequence is PCIRMGHEPGVAKYRRAQL. A helical membrane pass occupies residues 123–143; sequence AGVLLILLALCAIVATIWFPV. The Extracellular portion of the chain corresponds to 144 to 157; sequence CAHREITIVSFGYS. The helical transmembrane segment at 158–178 threads the bilayer; it reads LYAGWIGAVMCLVGGCVIVCC. The Cytoplasmic segment spans residues 179-207; the sequence is SGDAQSFGENRFYYSSGSSSPTHAKSAHV. 4 positions are modified to phosphoserine: Ser193, Ser194, Ser197, and Ser198.

This sequence belongs to the claudin family. Interacts with tetraspanin-3/TSPAN3. Interacts with OCLN.

Its subcellular location is the cell junction. It is found in the tight junction. The protein localises to the cell membrane. In terms of biological role, plays a major role in tight junction-specific obliteration of the intercellular space, through calcium-independent cell-adhesion activity. This Mus musculus (Mouse) protein is Claudin-11 (Cldn11).